Reading from the N-terminus, the 256-residue chain is Hydroxyacylglutathione hydrolase (256 aa).

The Zn(2+) site is built by H53, H55, D57, H58, H113, D130, and H168.

It belongs to the metallo-beta-lactamase superfamily. Glyoxalase II family. As to quaternary structure, monomer. Zn(2+) serves as cofactor.

The enzyme catalyses an S-(2-hydroxyacyl)glutathione + H2O = a 2-hydroxy carboxylate + glutathione + H(+). It participates in secondary metabolite metabolism; methylglyoxal degradation; (R)-lactate from methylglyoxal: step 2/2. In terms of biological role, thiolesterase that catalyzes the hydrolysis of S-D-lactoyl-glutathione to form glutathione and D-lactic acid. The protein is Hydroxyacylglutathione hydrolase of Tolumonas auensis (strain DSM 9187 / NBRC 110442 / TA 4).